Consider the following 84-residue polypeptide: NAD(P)H-quinone oxidoreductase subunit O (84 aa).

This sequence belongs to the complex I NdhO subunit family. As to quaternary structure, NDH-1 can be composed of about 15 different subunits; different subcomplexes with different compositions have been identified which probably have different functions.

It localises to the cellular thylakoid membrane. The enzyme catalyses a plastoquinone + NADH + (n+1) H(+)(in) = a plastoquinol + NAD(+) + n H(+)(out). The catalysed reaction is a plastoquinone + NADPH + (n+1) H(+)(in) = a plastoquinol + NADP(+) + n H(+)(out). Functionally, NDH-1 shuttles electrons from an unknown electron donor, via FMN and iron-sulfur (Fe-S) centers, to quinones in the respiratory and/or the photosynthetic chain. The immediate electron acceptor for the enzyme in this species is believed to be plastoquinone. Couples the redox reaction to proton translocation, and thus conserves the redox energy in a proton gradient. Cyanobacterial NDH-1 also plays a role in inorganic carbon-concentration. The chain is NAD(P)H-quinone oxidoreductase subunit O from Synechococcus sp. (strain CC9605).